A 682-amino-acid polypeptide reads, in one-letter code: MTAVSLSDGTGVLKTDPWLEPFSGALRERYAAYQKQRTIIEEHEGGLAEFSKGYKSMGFQVDKNGGVRYREWAPNATEARLIGEFNNWSHTANPMTKSPFGVWECYVPPVSPGVCPIPHDSMVKISMTIPGGESIDRIPTWITRVTQDLNISPVYDGRFWNPPKDQQYRFKHGHSTRPVEGLKIYEAHVGISSPNMRVTTYKEFEVDVLPKIKQLGYNCIQMMAIMEHAYYASFGYQVTNFFAASSRFGTPEELKSLVDKAHELGLTVLLDVVHSHASKNILDGINMYDGSDHLYFHEGGRGRHDQWDSRLFNYGHHEVLRFLLSNLRFWMDIYMFDGFRFDGVTSMMYKHHGIGSGFSGGYHEYFGDSVDLEAMVYLMLANAMLHENYPHVVTIAEDVSGMPTLCRPVAEGGVGFDYRLSMAIPDMWIKLLKEYTDDQWEMGHIVHNLTNRRHLEKSVAYAESHDQALVGDKTLAFWLMDKEMYDFMSDLSPLTPIIDRGLALHKMIRFIVHTLGGEAYLNFEGNEFGHPEWMDFPREGNGNSFAHARRQFNLVDDKLLRYKYLYEFDVAMNWLEDKYKWLNSPQAYVSLKHEGDKVIVFERAGLLFIFNFHPTQSFTDYRVGVDTAGEYKVILTSDETRFGGHNRIDMGGRYFTTPMEWNGRKNWLQVYSPSRTVLVLGL.

Tryptophan 88 and lysine 124 together coordinate (1,4-alpha-D-glucosyl)n. Aspartate 342 (nucleophile) is an active-site residue. Residue glutamate 397 is the Proton donor of the active site.

Belongs to the glycosyl hydrolase 13 family. GlgB subfamily.

The protein resides in the cytoplasm. It catalyses the reaction Transfers a segment of a (1-&gt;4)-alpha-D-glucan chain to a primary hydroxy group in a similar glucan chain.. Its pathway is glycan biosynthesis; glycogen biosynthesis. In terms of biological role, glycogen-branching enzyme participates in the glycogen biosynthetic process along with glycogenin and glycogen synthase. Generates alpha-1,6-glucosidic branches from alpha-1,4-linked glucose chains, to increase solubility of the glycogen polymer. The chain is 1,4-alpha-glucan-branching enzyme from Cryptococcus neoformans var. grubii serotype A (strain H99 / ATCC 208821 / CBS 10515 / FGSC 9487) (Filobasidiella neoformans var. grubii).